The chain runs to 587 residues: Aspartate--tRNA ligase (587 aa).

An L-aspartate-binding site is contributed by Glu-174. An aspartate region spans residues 198 to 201; sequence QITK. Arg-220 contributes to the L-aspartate binding site. ATP-binding positions include 220–222 and Gln-229; that span reads RDE. His-443 contributes to the L-aspartate binding site. Residue Glu-477 participates in ATP binding. Arg-484 is a binding site for L-aspartate. Residue 529 to 532 coordinates ATP; that stretch reads GLDR.

The protein belongs to the class-II aminoacyl-tRNA synthetase family. Type 1 subfamily. In terms of assembly, homodimer.

It localises to the cytoplasm. The catalysed reaction is tRNA(Asp) + L-aspartate + ATP = L-aspartyl-tRNA(Asp) + AMP + diphosphate. Functionally, catalyzes the attachment of L-aspartate to tRNA(Asp) in a two-step reaction: L-aspartate is first activated by ATP to form Asp-AMP and then transferred to the acceptor end of tRNA(Asp). This is Aspartate--tRNA ligase from Streptococcus pneumoniae (strain Hungary19A-6).